Consider the following 202-residue polypeptide: MKRLLVACCFLSGLISASALADASTDLQNRLSKVNSFHASFSQAVTSSDGAVVQEGEGELWVKRPNLFNWHMTSPDESVLISDGETLWFYNPFVEQATATWLKNATGNTPFMLITRNNPDDWKQYNVKQKGDDFELTPKSASGNLKQFAISVTPSGTIKSFTAVEQDGQRSAYTLKSQQSSVVDASKFTFTPPKGVTLDDQR.

The N-terminal stretch at 1–21 (MKRLLVACCFLSGLISASALA) is a signal peptide.

Belongs to the LolA family. Monomer.

It is found in the periplasm. Participates in the translocation of lipoproteins from the inner membrane to the outer membrane. Only forms a complex with a lipoprotein if the residue after the N-terminal Cys is not an aspartate (The Asp acts as a targeting signal to indicate that the lipoprotein should stay in the inner membrane). This Yersinia pestis bv. Antiqua (strain Antiqua) protein is Outer-membrane lipoprotein carrier protein.